We begin with the raw amino-acid sequence, 264 residues long: Transmembrane protein 41A (264 aa).

Positions 1–17 (MHSLLGLLLVFAGSTFA) are cleaved as a signal peptide. 5 helical membrane-spanning segments follow: residues 67–87 (VYVF…AIPG), 90–110 (FLNV…LCCV), 153–173 (LFFF…FLNL), 175–195 (APIL…GLIP), and 219–239 (WETA…GTLI). The segment at 96–207 (GALFGPWLGL…FICVQTGSIL (112 aa)) is VTT domain.

This sequence belongs to the TMEM41 family.

The protein resides in the membrane. In Bos taurus (Bovine), this protein is Transmembrane protein 41A (TMEM41A).